Here is a 140-residue protein sequence, read N- to C-terminus: Nucleoside diphosphate kinase (140 aa).

Positions 11, 59, 87, 93, 104, and 114 each coordinate ATP. H117 (pros-phosphohistidine intermediate) is an active-site residue.

Belongs to the NDK family. As to quaternary structure, homotetramer. The cofactor is Mg(2+).

It localises to the cytoplasm. It catalyses the reaction a 2'-deoxyribonucleoside 5'-diphosphate + ATP = a 2'-deoxyribonucleoside 5'-triphosphate + ADP. It carries out the reaction a ribonucleoside 5'-diphosphate + ATP = a ribonucleoside 5'-triphosphate + ADP. Its function is as follows. Major role in the synthesis of nucleoside triphosphates other than ATP. The ATP gamma phosphate is transferred to the NDP beta phosphate via a ping-pong mechanism, using a phosphorylated active-site intermediate. The chain is Nucleoside diphosphate kinase from Methylobacterium radiotolerans (strain ATCC 27329 / DSM 1819 / JCM 2831 / NBRC 15690 / NCIMB 10815 / 0-1).